The primary structure comprises 568 residues: DNA ligase (568 aa).

Glu249 provides a ligand contact to ATP. Residue Lys251 is the N6-AMP-lysine intermediate of the active site. Residues Arg256, Arg271, Glu301, Phe342, Arg418, and Lys424 each contribute to the ATP site.

This sequence belongs to the ATP-dependent DNA ligase family. Mg(2+) is required as a cofactor.

It catalyses the reaction ATP + (deoxyribonucleotide)n-3'-hydroxyl + 5'-phospho-(deoxyribonucleotide)m = (deoxyribonucleotide)n+m + AMP + diphosphate.. In terms of biological role, DNA ligase that seals nicks in double-stranded DNA during DNA replication, DNA recombination and DNA repair. In Methanocella arvoryzae (strain DSM 22066 / NBRC 105507 / MRE50), this protein is DNA ligase.